Here is a 181-residue protein sequence, read N- to C-terminus: Oligoribonuclease (181 aa).

An Exonuclease domain is found at L8–L171. Y129 is an active-site residue.

Belongs to the oligoribonuclease family.

The protein localises to the cytoplasm. Its function is as follows. 3'-to-5' exoribonuclease specific for small oligoribonucleotides. The sequence is that of Oligoribonuclease from Photorhabdus laumondii subsp. laumondii (strain DSM 15139 / CIP 105565 / TT01) (Photorhabdus luminescens subsp. laumondii).